The chain runs to 209 residues: Large ribosomal subunit protein bL25 (209 aa).

A disordered region spans residues 190–209; the sequence is LKSEEAASEGAAEEEAKDGE. Over residues 200 to 209 the composition is skewed to acidic residues; sequence AAEEEAKDGE.

Belongs to the bacterial ribosomal protein bL25 family. CTC subfamily. As to quaternary structure, part of the 50S ribosomal subunit; part of the 5S rRNA/L5/L18/L25 subcomplex. Contacts the 5S rRNA. Binds to the 5S rRNA independently of L5 and L18.

This is one of the proteins that binds to the 5S RNA in the ribosome where it forms part of the central protuberance. This chain is Large ribosomal subunit protein bL25, found in Brucella anthropi (strain ATCC 49188 / DSM 6882 / CCUG 24695 / JCM 21032 / LMG 3331 / NBRC 15819 / NCTC 12168 / Alc 37) (Ochrobactrum anthropi).